The sequence spans 333 residues: Phenylalanine--tRNA ligase alpha subunit (333 aa).

Glutamate 248 contacts Mg(2+).

It belongs to the class-II aminoacyl-tRNA synthetase family. Phe-tRNA synthetase alpha subunit type 1 subfamily. As to quaternary structure, tetramer of two alpha and two beta subunits. Requires Mg(2+) as cofactor.

The protein resides in the cytoplasm. It catalyses the reaction tRNA(Phe) + L-phenylalanine + ATP = L-phenylalanyl-tRNA(Phe) + AMP + diphosphate + H(+). The polypeptide is Phenylalanine--tRNA ligase alpha subunit (Ureaplasma urealyticum serovar 10 (strain ATCC 33699 / Western)).